We begin with the raw amino-acid sequence, 239 residues long: Major centromere autoantigen B (239 aa).

The tract at residues 28 to 185 is disordered; that stretch reads AGFGGGPNAT…DDEVPVPSFG (158 aa). Phosphothreonine is present on residues Thr37 and Thr39. Composition is skewed to acidic residues over residues 46–117 and 148–179; these read GEEE…EAED and GEED…DDEV. Residues 176-239 form a homodimerization region; sequence DDEVPVPSFG…AGARGLGHQS (64 aa).

Antiparallel homodimer. Interacts with CENPT. Identified in a centromere complex containing histones H2A, H2B and H4, and at least CENPA, CENPB, CENPC, CENPT, CENPN, HJURP, SUPT16H, SSRP1 and RSF1. In terms of processing, poly-ADP-ribosylated by PARP1. Post-translationally, N-terminally methylated by METTL11A/NTM1. Alpha-N-methylation is stimulated in response extracellular stimuli, including increased cell density and heat shock, and seems to facilitate binding to CENP-B boxes. Chromatin-bound CENP-B is primarily trimethylated.

The protein resides in the nucleus. It localises to the chromosome. Its subcellular location is the centromere. Interacts with centromeric heterochromatin in chromosomes and binds to a specific 17 bp subset of alphoid satellite DNA, called the CENP-B box. May organize arrays of centromere satellite DNA into a higher-order structure which then directs centromere formation and kinetochore assembly in mammalian chromosomes. The sequence is that of Major centromere autoantigen B (CENPB) from Ovis aries (Sheep).